The chain runs to 263 residues: 3-methyl-2-oxobutanoate hydroxymethyltransferase (263 aa).

Residues aspartate 45 and aspartate 84 each coordinate Mg(2+). 3-methyl-2-oxobutanoate is bound by residues 45–46 (DS), aspartate 84, and lysine 112. Residue glutamate 114 participates in Mg(2+) binding. Glutamate 180 acts as the Proton acceptor in catalysis.

This sequence belongs to the PanB family. As to quaternary structure, homodecamer; pentamer of dimers. Mg(2+) is required as a cofactor.

It is found in the cytoplasm. The enzyme catalyses 3-methyl-2-oxobutanoate + (6R)-5,10-methylene-5,6,7,8-tetrahydrofolate + H2O = 2-dehydropantoate + (6S)-5,6,7,8-tetrahydrofolate. It participates in cofactor biosynthesis; (R)-pantothenate biosynthesis; (R)-pantoate from 3-methyl-2-oxobutanoate: step 1/2. Its function is as follows. Catalyzes the reversible reaction in which hydroxymethyl group from 5,10-methylenetetrahydrofolate is transferred onto alpha-ketoisovalerate to form ketopantoate. The sequence is that of 3-methyl-2-oxobutanoate hydroxymethyltransferase from Salmonella enteritidis PT4 (strain P125109).